The chain runs to 142 residues: Hemoglobin subunit alpha (142 aa).

At Ser-1 the chain carries N-acetylserine. The Globin domain maps to 1–142; it reads SLSDKDKAAV…VALALAERYR (142 aa). Residue His-59 participates in O2 binding. His-88 contacts heme b.

Belongs to the globin family. In terms of assembly, heterotetramer of two alpha chains and two beta chains. In terms of tissue distribution, red blood cells.

Involved in oxygen transport from gills to the various peripheral tissues. The sequence is that of Hemoglobin subunit alpha (hba) from Gymnodraco acuticeps (Antarctic dragonfish).